We begin with the raw amino-acid sequence, 117 residues long: Large ribosomal subunit protein bL20c (117 aa).

This sequence belongs to the bacterial ribosomal protein bL20 family.

It is found in the plastid. The protein localises to the chloroplast. Binds directly to 23S ribosomal RNA and is necessary for the in vitro assembly process of the 50S ribosomal subunit. It is not involved in the protein synthesizing functions of that subunit. The protein is Large ribosomal subunit protein bL20c of Olimarabidopsis pumila (Dwarf rocket).